A 425-amino-acid chain; its full sequence is Dihydroorotase (425 aa).

His61 and His63 together coordinate Zn(2+). Substrate-binding positions include 63–65 (HLR) and Asn95. Zn(2+) is bound by residues Asp153, His180, and His233. Asn279 contributes to the substrate binding site. Asp306 provides a ligand contact to Zn(2+). Asp306 is a catalytic residue. His310 contacts substrate.

It belongs to the metallo-dependent hydrolases superfamily. DHOase family. Class I DHOase subfamily. Zn(2+) is required as a cofactor.

It catalyses the reaction (S)-dihydroorotate + H2O = N-carbamoyl-L-aspartate + H(+). It functions in the pathway pyrimidine metabolism; UMP biosynthesis via de novo pathway; (S)-dihydroorotate from bicarbonate: step 3/3. Catalyzes the reversible cyclization of carbamoyl aspartate to dihydroorotate. The polypeptide is Dihydroorotase (Geotalea daltonii (strain DSM 22248 / JCM 15807 / FRC-32) (Geobacter daltonii)).